We begin with the raw amino-acid sequence, 147 residues long: Large ribosomal subunit protein bL9 (147 aa).

This sequence belongs to the bacterial ribosomal protein bL9 family.

Binds to the 23S rRNA. The chain is Large ribosomal subunit protein bL9 from Halothermothrix orenii (strain H 168 / OCM 544 / DSM 9562).